The primary structure comprises 583 residues: Cell division protein FtsZ (583 aa).

GTP contacts are provided by residues 24 to 28 (GGGGN), 111 to 113 (GTG), glutamate 142, arginine 146, and aspartate 190. Disordered stretches follow at residues 391–425 (HQQP…VQQA) and 510–583 (TNSL…RQSN). The span at 412-425 (APAALRPAQPVQQA) shows a compositional bias: low complexity.

It belongs to the FtsZ family. Homodimer. Polymerizes to form a dynamic ring structure in a strictly GTP-dependent manner. Interacts directly with several other division proteins.

Its subcellular location is the cytoplasm. Essential cell division protein that forms a contractile ring structure (Z ring) at the future cell division site. The regulation of the ring assembly controls the timing and the location of cell division. One of the functions of the FtsZ ring is to recruit other cell division proteins to the septum to produce a new cell wall between the dividing cells. Binds GTP and shows GTPase activity. This Rhizobium radiobacter (Agrobacterium tumefaciens) protein is Cell division protein FtsZ.